A 215-amino-acid chain; its full sequence is Glycerol-3-phosphate acyltransferase (215 aa).

6 helical membrane passes run 3-23 (LILL…LWIG), 42-61 (TNTF…LIDI), 68-90 (TLLP…FAVL), 110-130 (AGVL…VFVL), 134-154 (LFSM…ISVL), and 162-182 (LLPG…AIII).

This sequence belongs to the PlsY family. Probably interacts with PlsX.

The protein resides in the cell membrane. It catalyses the reaction an acyl phosphate + sn-glycerol 3-phosphate = a 1-acyl-sn-glycero-3-phosphate + phosphate. It participates in lipid metabolism; phospholipid metabolism. Catalyzes the transfer of an acyl group from acyl-phosphate (acyl-PO(4)) to glycerol-3-phosphate (G3P) to form lysophosphatidic acid (LPA). This enzyme utilizes acyl-phosphate as fatty acyl donor, but not acyl-CoA or acyl-ACP. The chain is Glycerol-3-phosphate acyltransferase from Streptococcus equi subsp. zooepidemicus (strain H70).